We begin with the raw amino-acid sequence, 264 residues long: Tritrans,polycis-undecaprenyl-diphosphate synthase (geranylgeranyl-diphosphate specific) (264 aa).

D43 is a catalytic residue. D43 is a binding site for Mg(2+). Substrate contacts are provided by residues 44–47 (GNRR), W48, H60, and 88–90 (STE). N91 functions as the Proton acceptor in the catalytic mechanism. Residues F92, R94, R213, and 219–221 (RIS) contribute to the substrate site. E232 contacts Mg(2+).

It belongs to the UPP synthase family. Homodimer. Requires Mg(2+) as cofactor.

It catalyses the reaction geranylgeranyl diphosphate + 7 isopentenyl diphosphate = tri-trans,hepta-cis-undecaprenyl diphosphate + 7 diphosphate. Functionally, catalyzes the sequential condensation of isopentenyl diphosphate (IPP) with geranylgeranyl diphosphate (GGPP) to yield (2Z,6Z,10Z,14Z,18Z,22Z,26Z,30E,34E,38E)-undecaprenyl diphosphate (tritrans,heptacis-UPP). It is probably the precursor of glycosyl carrier lipids. This chain is Tritrans,polycis-undecaprenyl-diphosphate synthase (geranylgeranyl-diphosphate specific), found in Pyrococcus horikoshii (strain ATCC 700860 / DSM 12428 / JCM 9974 / NBRC 100139 / OT-3).